Consider the following 89-residue polypeptide: Small ribosomal subunit protein uS14 (89 aa).

This sequence belongs to the universal ribosomal protein uS14 family. Part of the 30S ribosomal subunit. Contacts proteins S3 and S10.

In terms of biological role, binds 16S rRNA, required for the assembly of 30S particles and may also be responsible for determining the conformation of the 16S rRNA at the A site. The sequence is that of Small ribosomal subunit protein uS14 from Latilactobacillus sakei subsp. sakei (strain 23K) (Lactobacillus sakei subsp. sakei).